The sequence spans 799 residues: Zinc finger X-linked protein ZXDA (799 aa).

The disordered stretch occupies residues 1–89; the sequence is MEIPKLLPAR…QPSGGGDDFF (89 aa). Gly residues predominate over residues 13–26; the sequence is LQGGGGGGIPAGGG. 10 C2H2-type zinc fingers span residues 267–291, 300–324, 330–354, 360–382, 389–413, 420–444, 450–474, 480–504, 510–534, and 543–568; these read YLCP…LLTH, FKCP…LQSH, FGCP…MKGH, FKCE…QRSH, YQCA…NRAH, FSCS…LRSH, FLCD…KRKH, FMCP…SITH, FVCP…SKKH, and SRCP…VKRH. The required for interaction with ZXDC stretch occupies residues 267–573; it reads YLCPEALCGQ…MVKRHKVGQD (307 aa). The tract at residues 572 to 699 is required for transcriptional activation; that stretch reads QDLLAQLEAA…NMDEVSSVSV (128 aa).

Belongs to the ZXD family. Self-associates. Interacts with ZXDC and CIITA. May be expressed in brain, heart, kidney, liver, lung, muscle and placenta.

The protein localises to the nucleus. Cooperates with CIITA to promote transcription of MHC class I and MHC class II genes. This chain is Zinc finger X-linked protein ZXDA (ZXDA), found in Homo sapiens (Human).